Consider the following 459-residue polypeptide: Protein ABHD15 (459 aa).

Positions 1-28 are cleaved as a signal peptide; that stretch reads MPPWAAALALLLAALALLLLRPWKRAVG. Residues Asp-351 and His-382 each act as charge relay system in the active site. At Ser-425 the chain carries Phosphoserine.

Belongs to the AB hydrolase superfamily. AB hydrolase 4 family. Interacts with PDE3B; this interaction regulates PDE3B's stability and expression and, thereby, impacts the antilipolytic action of insulin. Mainly expressed in adipocytes and adipose depots, followed by a weak expression in liver and pancreas. In white adipose tissue (WAT), only expressed in mature adipocytes and primary adipocytes differentiated from stromal vascular cells (SVCs), but not in undifferentiated SVCs.

The protein resides in the secreted. In terms of biological role, may regulate adipocyte lipolysis and liver lipid accumulation. The polypeptide is Protein ABHD15 (Mus musculus (Mouse)).